The primary structure comprises 478 residues: MTIDHQHIFVGGQWIAPKSTQRSNILNASTEELVGSVPKCNNEDMDRAVAAAREAMRSLAWAGLDGKGRAQHLRRFADAVERRGQQLARSVSLQNGMPINVADQLESAFVVSLLRYYASLAENLVEEEARPSPTGSTTLVRRDPVGVVGAIIPWNFPVALSIFKIAPALAAGCAVVVKPSSGTVLDSYVLAEAAAEAGLPPGVINWVPGDRGIGSHLVSHPGVDKVAFTGSTSAGRIIAEACARLLRPVTLELGGKSAAIVLEDADLDALIRSLPMSSVLNNGQACFSCTRILAPAGRYDEVVDAIAGAVSAYSVGDALDRATVVGPMASAAHRDSVQRYIELGTGEARLVVGGGRTSQDRGWFVQPTVFADVDNRSRIAREEIFGPVLSIIRYEGEDEAVEIANDSEYGLGGTVWSTDHDHAVTIARRMETGTVGINGYMPDLNAPFGGVKSSGMGRELGPESIGAYQRYKSVYLLG.

NAD(+) is bound at residue 230 to 235 (GSTSAG). Glu252 (proton acceptor) is an active-site residue. The Nucleophile role is filled by Cys286.

The protein belongs to the aldehyde dehydrogenase family.

The enzyme catalyses (2E)-geranial + NAD(+) + H2O = geranate + NADH + 2 H(+). It carries out the reaction perillyl aldehyde + NAD(+) + H2O = perillate + NADH + 2 H(+). It functions in the pathway terpene metabolism; monoterpene degradation. Its function is as follows. Involved in the degradation of the monoterpenes beta-myrcene and limonene. During anaerobic degradation of beta-myrcene, catalyzes the NAD(+)-dependent oxidation of geranial to geranic acid. Seems to be specific for the trans-isomer geranial, since it does not act on the cis-isomer neral. During degradation of limonene, catalyzes the NAD(+)-dependent conversion of perillyl aldehyde to perrilic acid. In Castellaniella defragrans (strain DSM 12143 / CCUG 39792 / 65Phen) (Alcaligenes defragrans), this protein is Geranial dehydrogenase.